We begin with the raw amino-acid sequence, 274 residues long: Large ribosomal subunit protein uL2 (274 aa).

Residues 220–259 (VRGAAMNPRDHPHGGGEGRAPRGMSTPKTKWGKPARGVKT) form a disordered region. Basic and acidic residues predominate over residues 227-239 (PRDHPHGGGEGRA). Residues 249–259 (KWGKPARGVKT) are compositionally biased toward basic residues.

The protein belongs to the universal ribosomal protein uL2 family. In terms of assembly, part of the 50S ribosomal subunit. Forms a bridge to the 30S subunit in the 70S ribosome.

Its function is as follows. One of the primary rRNA binding proteins. Required for association of the 30S and 50S subunits to form the 70S ribosome, for tRNA binding and peptide bond formation. It has been suggested to have peptidyltransferase activity; this is somewhat controversial. Makes several contacts with the 16S rRNA in the 70S ribosome. This chain is Large ribosomal subunit protein uL2, found in Chloroflexus aggregans (strain MD-66 / DSM 9485).